We begin with the raw amino-acid sequence, 297 residues long: 6-dehydroglucose reductase (297 aa).

W20, R21, and D49 together coordinate NADP(+). Residue Y54 is the Proton donor of the active site. D-glucose-binding residues include Y54, K98, H129, and R130. Residues S159, N160, Q181, S211, L213, G215, G261, T262, N263, and R267 each coordinate NADP(+).

This sequence belongs to the aldo/keto reductase family. In terms of assembly, homotrimer.

It carries out the reaction D-glucose + NADP(+) = 6-dehydro-D-glucose + NADPH + H(+). Part of the sulfoquinovose monooxygenase (sulfo-SMO) pathway, a D-sulfoquinovose degradation pathway that enables the complete utilization of all carbons within sulfoquinovose (SQ) with concomitant production of inorganic sulfite. Catalyzes the NADP-dependent reduction of 6-dehydro-D-glucose to D-glucose. Cannot use NADH. The sequence is that of 6-dehydroglucose reductase from Agrobacterium fabrum (strain C58 / ATCC 33970) (Agrobacterium tumefaciens (strain C58)).